The chain runs to 155 residues: Ribosomal RNA large subunit methyltransferase H (155 aa).

S-adenosyl-L-methionine is bound at residue Gly-103.

It belongs to the RNA methyltransferase RlmH family. In terms of assembly, homodimer.

Its subcellular location is the cytoplasm. The enzyme catalyses pseudouridine(1915) in 23S rRNA + S-adenosyl-L-methionine = N(3)-methylpseudouridine(1915) in 23S rRNA + S-adenosyl-L-homocysteine + H(+). Functionally, specifically methylates the pseudouridine at position 1915 (m3Psi1915) in 23S rRNA. This is Ribosomal RNA large subunit methyltransferase H from Caulobacter vibrioides (strain ATCC 19089 / CIP 103742 / CB 15) (Caulobacter crescentus).